The sequence spans 432 residues: Adenylosuccinate synthetase (432 aa).

Residues 12–18 and 40–42 each bind GTP; these read GDEGKGK and GHT. D13 serves as the catalytic Proton acceptor. Mg(2+)-binding residues include D13 and G40. IMP-binding positions include 13-16, 38-41, T130, R144, Q225, T240, and R304; these read DEGK and NAGH. H41 functions as the Proton donor in the catalytic mechanism. 300 to 306 provides a ligand contact to substrate; the sequence is STTGRPR. GTP is bound by residues R306, 332–334, and 414–416; these read KLD and SVG.

The protein belongs to the adenylosuccinate synthetase family. As to quaternary structure, homodimer. It depends on Mg(2+) as a cofactor.

It localises to the cytoplasm. The enzyme catalyses IMP + L-aspartate + GTP = N(6)-(1,2-dicarboxyethyl)-AMP + GDP + phosphate + 2 H(+). It functions in the pathway purine metabolism; AMP biosynthesis via de novo pathway; AMP from IMP: step 1/2. Functionally, plays an important role in the de novo pathway of purine nucleotide biosynthesis. Catalyzes the first committed step in the biosynthesis of AMP from IMP. The polypeptide is Adenylosuccinate synthetase (Citrifermentans bemidjiense (strain ATCC BAA-1014 / DSM 16622 / JCM 12645 / Bem) (Geobacter bemidjiensis)).